The following is a 162-amino-acid chain: MHKEPMTKYGYEKLSKELEYLKTTARPEVAKEIDSARELGDLKENAEYHAAKEKQSHIERRIAELSDILSRAVVVDPKEHAHNRVAFGSTVYLIDVDTDEKEKYTIVGAPEANPDKGLISYHSPLAKALIGKEVGDEVEVNLPGGVKVYEIDKICYEDICFS.

Positions 44-72 (ENAEYHAAKEKQSHIERRIAELSDILSRA) form a coiled coil.

The protein belongs to the GreA/GreB family.

Its function is as follows. Necessary for efficient RNA polymerase transcription elongation past template-encoded arresting sites. The arresting sites in DNA have the property of trapping a certain fraction of elongating RNA polymerases that pass through, resulting in locked ternary complexes. Cleavage of the nascent transcript by cleavage factors such as GreA or GreB allows the resumption of elongation from the new 3'terminus. GreA releases sequences of 2 to 3 nucleotides. The chain is Transcription elongation factor GreA from Nautilia profundicola (strain ATCC BAA-1463 / DSM 18972 / AmH).